The primary structure comprises 127 residues: Apolipoprotein C-IV (127 aa).

Residues 1–27 (MSLLRNRLQALPALCLCVLVLACIGAC) form the signal peptide. Asparagine 63 carries N-linked (GlcNAc...) asparagine glycosylation.

This sequence belongs to the apolipoprotein C4 family. Expressed by the liver and secreted in plasma.

It is found in the secreted. Functionally, may participate in lipoprotein metabolism. The sequence is that of Apolipoprotein C-IV (APOC4) from Homo sapiens (Human).